The primary structure comprises 123 residues: MTMLWVCLAGGLGAVARFLLDSRINSRFSVPVPLGTLVINVMGSLLLGLITAAALNHLGFSQNLKEPLGTGFCGGFTTFSTASVETARAAYGCGRRVGALHCMGMAIAGVLAAILGLALGSRV.

Helical transmembrane passes span 1 to 21 (MTML…FLLD) and 30 to 50 (VPVP…LGLI). Na(+) contacts are provided by G74 and T77. The helical transmembrane segment at 99 to 119 (ALHCMGMAIAGVLAAILGLAL) threads the bilayer.

It belongs to the fluoride channel Fluc/FEX (TC 1.A.43) family.

It localises to the cell membrane. The enzyme catalyses fluoride(in) = fluoride(out). Its activity is regulated as follows. Na(+) is not transported, but it plays an essential structural role and its presence is essential for fluoride channel function. Its function is as follows. Fluoride-specific ion channel. Important for reducing fluoride concentration in the cell, thus reducing its toxicity. The polypeptide is Fluoride-specific ion channel FluC 2 (Cutibacterium acnes (strain DSM 16379 / KPA171202) (Propionibacterium acnes)).